A 642-amino-acid polypeptide reads, in one-letter code: Threonine--tRNA ligase (642 aa).

One can recognise a TGS domain in the interval 1–65; that stretch reads MSDIITVTLP…DEDVKLQIFT (65 aa). Residues 248–541 are catalytic; the sequence is DHRKLGKELD…LIEHFAGAFP (294 aa). 3 residues coordinate Zn(2+): Cys-342, His-393, and His-518.

It belongs to the class-II aminoacyl-tRNA synthetase family. As to quaternary structure, homodimer. It depends on Zn(2+) as a cofactor.

Its subcellular location is the cytoplasm. The enzyme catalyses tRNA(Thr) + L-threonine + ATP = L-threonyl-tRNA(Thr) + AMP + diphosphate + H(+). Catalyzes the attachment of threonine to tRNA(Thr) in a two-step reaction: L-threonine is first activated by ATP to form Thr-AMP and then transferred to the acceptor end of tRNA(Thr). Also edits incorrectly charged L-seryl-tRNA(Thr). In Myxococcus xanthus (strain DK1622), this protein is Threonine--tRNA ligase.